A 198-amino-acid polypeptide reads, in one-letter code: dITP/XTP pyrophosphatase (198 aa).

Position 7–12 (7–12) interacts with substrate; the sequence is THNPHK. Mg(2+) contacts are provided by Glu40 and Asp69. Catalysis depends on Asp69, which acts as the Proton acceptor. Substrate-binding positions include Thr70, 151 to 154, Lys174, and 179 to 180; these read FGYD and HR.

It belongs to the HAM1 NTPase family. As to quaternary structure, homodimer. Mg(2+) is required as a cofactor.

The catalysed reaction is XTP + H2O = XMP + diphosphate + H(+). It catalyses the reaction dITP + H2O = dIMP + diphosphate + H(+). It carries out the reaction ITP + H2O = IMP + diphosphate + H(+). Functionally, pyrophosphatase that catalyzes the hydrolysis of nucleoside triphosphates to their monophosphate derivatives, with a high preference for the non-canonical purine nucleotides XTP (xanthosine triphosphate), dITP (deoxyinosine triphosphate) and ITP. Seems to function as a house-cleaning enzyme that removes non-canonical purine nucleotides from the nucleotide pool, thus preventing their incorporation into DNA/RNA and avoiding chromosomal lesions. The polypeptide is dITP/XTP pyrophosphatase (Thermoanaerobacter sp. (strain X514)).